Reading from the N-terminus, the 751-residue chain is Trehalose phosphorylase (751 aa).

A propeptide spanning residues 1–26 is cleaved from the precursor; sequence MSTPHHQFESKSSTAIRRRLSSSVSS. A disordered region spans residues 1-28; it reads MSTPHHQFESKSSTAIRRRLSSSVSSKQ.

This sequence belongs to the glycosyltransferase group 1 family. Glycosyltransferase 4 subfamily. As to quaternary structure, homodimer. In terms of tissue distribution, expressed in mycelia, stipes and pilei.

It catalyses the reaction alpha,alpha-trehalose + phosphate = alpha-D-glucose + alpha-D-glucose 1-phosphate. In terms of biological role, reversibly catalyzes the synthesis and degradation of trehalose from glucose and alpha-D-glucose 1-phosphate. The equilibrium lies in the direction of trehalose synthesis. In Pleurotus sajor-caju (Oyster mushroom), this protein is Trehalose phosphorylase.